The sequence spans 234 residues: Probable chemoreceptor glutamine deamidase CheD (234 aa).

This sequence belongs to the CheD family.

The enzyme catalyses L-glutaminyl-[protein] + H2O = L-glutamyl-[protein] + NH4(+). Functionally, probably deamidates glutamine residues to glutamate on methyl-accepting chemotaxis receptors (MCPs), playing an important role in chemotaxis. This Burkholderia pseudomallei (strain 1710b) protein is Probable chemoreceptor glutamine deamidase CheD.